The following is a 234-amino-acid chain: uncharacterized protein (234 aa).

Residues 13–32 form a helical membrane-spanning segment; sequence KSINYYIFFFQYTLVYNTIQ. 2 disordered regions span residues 102–130 and 159–185; these read HSKTTSLPFSSSSPQSSSSSSSSSSSSNS and ESDSKSDSEFDSESNSDFDSESESEYE. Over residues 103–130 the composition is skewed to low complexity; that stretch reads SKTTSLPFSSSSPQSSSSSSSSSSSSNS. Over residues 167-185 the composition is skewed to acidic residues; the sequence is EFDSESNSDFDSESESEYE.

The protein resides in the membrane. This is an uncharacterized protein from Dictyostelium discoideum (Social amoeba).